The following is a 292-amino-acid chain: 4-hydroxy-tetrahydrodipicolinate synthase (292 aa).

Thr-45 is a binding site for pyruvate. Tyr-133 serves as the catalytic Proton donor/acceptor. Lys-161 functions as the Schiff-base intermediate with substrate in the catalytic mechanism. Residue Ile-203 participates in pyruvate binding.

Belongs to the DapA family. As to quaternary structure, homotetramer; dimer of dimers.

The protein localises to the cytoplasm. It carries out the reaction L-aspartate 4-semialdehyde + pyruvate = (2S,4S)-4-hydroxy-2,3,4,5-tetrahydrodipicolinate + H2O + H(+). It functions in the pathway amino-acid biosynthesis; L-lysine biosynthesis via DAP pathway; (S)-tetrahydrodipicolinate from L-aspartate: step 3/4. Functionally, catalyzes the condensation of (S)-aspartate-beta-semialdehyde [(S)-ASA] and pyruvate to 4-hydroxy-tetrahydrodipicolinate (HTPA). The chain is 4-hydroxy-tetrahydrodipicolinate synthase from Dechloromonas aromatica (strain RCB).